The following is a 368-amino-acid chain: H-2 class I histocompatibility antigen, D-P alpha chain (368 aa).

The signal sequence occupies residues 1 to 21; it reads MAPRTLLLLLAAALAPTQTRA. Residues 22 to 111 are alpha-1; that stretch reads GPHSLRYFVT…LLGYYNQSKG (90 aa). At 22 to 303 the chain is on the extracellular side; it reads GPHSLRYFVT…RWEPPPSTDS (282 aa). Asn-107 carries an N-linked (GlcNAc...) asparagine glycan. The alpha-2 stretch occupies residues 112–203; that stretch reads GSHTIQGMRG…ELGNATLLCT (92 aa). Cysteines 122 and 185 form a disulfide. 2 N-linked (GlcNAc...) asparagine glycosylation sites follow: Asn-197 and Asn-277. The interval 204-295 is alpha-3; sequence DPPKAHVTHH…GLPEPLTLRW (92 aa). The 89-residue stretch at 206–294 folds into the Ig-like C1-type domain; sequence PKAHVTHHPR…EGLPEPLTLR (89 aa). Cysteines 224 and 280 form a disulfide. The segment at 296-303 is connecting peptide; the sequence is EPPPSTDS. The chain crosses the membrane as a helical span at residues 304 to 330; it reads YMVIVAVLVVLGAVFIIGAVVAFVMMM. Over 331 to 368 the chain is Cytoplasmic; sequence RRNTGGKGGDYTLAPGSQSSEMSLRDCKVMVHDSHSLA. Residues Ser-350 and Ser-353 each carry the phosphoserine modification.

Belongs to the MHC class I family. In terms of assembly, heterodimer of an alpha chain and a beta chain (beta-2-microglobulin).

Its subcellular location is the membrane. In terms of biological role, involved in the presentation of foreign antigens to the immune system. The protein is H-2 class I histocompatibility antigen, D-P alpha chain (H2-D1) of Mus musculus (Mouse).